The following is a 525-amino-acid chain: GMP synthase [glutamine-hydrolyzing] (525 aa).

Residues 9–207 (RILILDFGSQ…VLQLCACEKL (199 aa)) enclose the Glutamine amidotransferase type-1 domain. Cys86 acts as the Nucleophile in catalysis. Residues His181 and Glu183 contribute to the active site. A GMPS ATP-PPase domain is found at 208–400 (WTPANIVEDA…LGLPYDMVYR (193 aa)). Position 235–241 (235–241 (SGGVDSS)) interacts with ATP.

Homodimer.

The catalysed reaction is XMP + L-glutamine + ATP + H2O = GMP + L-glutamate + AMP + diphosphate + 2 H(+). It functions in the pathway purine metabolism; GMP biosynthesis; GMP from XMP (L-Gln route): step 1/1. In terms of biological role, catalyzes the synthesis of GMP from XMP. The chain is GMP synthase [glutamine-hydrolyzing] from Cellvibrio japonicus (strain Ueda107) (Pseudomonas fluorescens subsp. cellulosa).